Reading from the N-terminus, the 2561-residue chain is MDVSKEEGQRANGFTNGNINETTNGHTNGYTNGHTNGHTNGTTNATTNGTTNGTMNGTTNGTTNRTTNGTTNITPEFEGKLPQVPVAICGIGVRLPGGVRSDSDLFQMLVDKRDARGIVPADRYNVKAYYDPRGRPGSILTEYGYYIDEDLAQMDASMFSMSNVELSMMDPAQRLLLEVTREAFEGAGEGDFRGKNIGTFVGDFTTDWQELQYADLIHTAPYQVIGGSDFVLSNRLAYEYNLTGPSASIKTACSATAEALHEALLAIRAGSCPSAIVAGANLILTPRGGIGMTAMGVLSPDGSCKTFDSSANGFARGDSVCAIYIKRLDLALRDGNPIRAVIRACDSNADGGGSGRTFGTPNPITHEALIRKTYADAGLDLHSTSVIECHGTGTPIGDPLEAEAVANCFADGVRPVYIGSVKPNLGHGEGGSAMASIIKAVVALENRTIIPNVKFNNPNPKIAWDKNLKVPTEPLPWPQDCQERMSINSFGLGGSNTHIIIDSAASFGIPSPENSLRETANSPNEAQTSILLMSANSPSSITAMSQRYSEYIQAHPDRVEDMAFTLATRRERLKQASYCIVDHGISSNPPPPMASSGVLQTAFIFTGQGAQWMGMGKELMQQQPAFAHSIREMDTVIKSLEYAPQWSLEGILLSDNDADKSALAQTDRAQPISTALQVALVDLLATWHVYPAAVVGHSSGEVAAAYAAGILTRREAIITAFYRGHACARCEIPGGMAAVGLGRTKVEPSLKTGVVIACENSNASVTISGDRSALEEVMADLREKYPTALVRKLQVPMGYHSHHMATVADLYKELVSPHLDPKAPQVPYFSTVYGRQVQEGKAFGPSYWQLNMESPVLFRTAVSEMLKEMGPNTAHLEVGPHSALAGPLRQIYEETGNSAPYASTMVRGQNSCTAFLEAIGKLFCFGLSPQIPSTKTRTVLPDIPTYPWDYKDKFWSETRVMSNWRFKKHRTHELLGERSLESSDIEPCWRNLLRTGTVPWLADHCVGSDIVFPAAGFIAMAGAAASQLAGSDGHYTVREVNIFSALVLHETTATELITTLRKQPLTSSLQSKWFEFSISSESNGVWTKYCSGLVTASVVISAGLPEMPDTKTFPRKVDTSRWYTTMSRIGLNYGRRFVGLEEISCSPVHQVASVQITDVQDDYEPYPLHPSTLDKFLQSWTLAFTKGEYRLLTQLYLPTFIEELSVSPAPRKKISGRTLASGIPGTTVGTSLGMVDDELVFSLRGFKCKRTDESFIQNVSKPRSMTLEWHLDTDFTDLHQLIRPTRDTAPENEILERLYLLYALENWDQLKDSTSSHPHLNIYLSWLAEEVKSFTEPGHPLISDSKELVSMDVPHRRREIAFLRQRSKHYPMAAAVEVYARTCARMVEIMEGKDNLLNVLLEDDLLAKFYNYYNDASDLSSFFQAAGLNKPHMRVLEIGAGTGGWTSHALRGLTSELGDRLYEEYTITDVSHGFLNQCKERFAAHSNIKYALLDISSDPLEQGFEEGYYDIVIASNVLHATPKLVETLSRCRKVLNPAGRLLIQEACAPGSRHGYIMGLFEGWWAGREDGRVRSPLMPVEEWDARLKLAGFEGAGTVVLDGQVPFYNYANIIAQPAPTTNVQPESRLTLMTSRPELDDFSATTKTMLEEAGYQLDVCSWGAELPSDQDVVFLVDTEASVPSLADENPENLATFLRYMKDISTSTVLWVTKPAQTACPDPRNGLITGMARTLRAELDMYIATLELDKLDRSAASAVLQVLRKLQDAARLEETQEKDEKSSDIKVDFEYALSDGELLIPRFHPFVVDQALLKDVPRADSRHLEIGQRGMLNTLHWVGDTLSALGSNEVELNMTAVGMNFLDLAVAMNIVDMSQSLGKGYNALGSEGSGIVTRVGSNVTNLKIGDRVATMGVDTSVFATKLQRPAGSCVRLPSGLSDEDAAGILVPYATVLWSFIEKARLKKGQTVLIHSAAGGVGIAAIHVARWIGAEIYTTVGAQAKVDFLVNELGVARDHIFHSRDDSFVKDVLSATKGKGIDVVLNSLSGELLHATWQCVAPGGCMLEIGKRDFLGRAQLAMHLFEENRAYFGIDLSRLALSEPEALQDLLQKTMDLLEKQQLQPLWPTNTFDAVAVEDAFRYMQRGVHMGRIVVRMPEDDSILPIAPMLPKPQFKADSTYLLTGGMGGLGRSIIRWMVSYGAKDITVVSRSAGNRDVDRALITEIGELGCTLRCFAADISDMDSLQNVLSSLTKPVAGVLHMAMVLRDVGTLNMDFDSWTAALRPKVQGTWNLHDKLSGSLDFFVLFSSISGTLGSYGQANYAAGNTFLDSFVRFRHGLGQPASVIDIAAIGDVGYVAETKDVAERIGRAFGSLGTEQEFLDTLQLAIARSTEVPEQQKLSSKTTKYSEPSQIVMHNKMIPPLSDPRNTTPWKSDARMAIYRNTEEAPQSANSQSKERLGLFLVSLSTDPDQLDEPETPVLFAQEIAKRVAAFLMKGDKDDDALDTSLTLSQMGADSLVAIEIRNWWKQTFGMEISTLELNSPGQTFDSLGRLATKRLKEAYLLKNSGS.

The tract at residues 1–77 (MDVSKEEGQR…NGTTNITPEF (77 aa)) is disordered. Low complexity predominate over residues 20 to 74 (NETTNGHTNGYTNGHTNGHTNGTTNATTNGTTNGTMNGTTNGTTNRTTNGTTNIT). Positions 83–503 (QVPVAICGIG…GSNTHIIIDS (421 aa)) constitute a Ketosynthase family 3 (KS3) domain. Active-site for beta-ketoacyl synthase activity residues include cysteine 253, histidine 390, and histidine 427. Residues 603 to 925 (FIFTGQGAQW…LEAIGKLFCF (323 aa)) are malonyl-CoA:ACP transacylase (MAT) domain. The N-terminal hotdog fold stretch occupies residues 972-1101 (HELLGERSLE…GLVTASVVIS (130 aa)). Positions 972–1253 (HELLGERSLE…RGFKCKRTDE (282 aa)) are dehydratase (DH) domain. Positions 972–1257 (HELLGERSLE…CKRTDESFIQ (286 aa)) constitute a PKS/mFAS DH domain. Histidine 1004 (proton acceptor; for dehydratase activity) is an active-site residue. Residues 1112-1257 (TFPRKVDTSR…CKRTDESFIQ (146 aa)) are C-terminal hotdog fold. The active-site Proton donor; for dehydratase activity is aspartate 1174. The interval 1421–1599 (SFFQAAGLNK…GFEGAGTVVL (179 aa)) is methyltransferase (CMet) domain. The enoyl reductase (ER) (ER) domain stretch occupies residues 1826–2146 (GMLNTLHWVG…RGVHMGRIVV (321 aa)). The interval 2170-2343 (STYLLTGGMG…PASVIDIAAI (174 aa)) is ketoreductase (KR) domain. The Carrier domain maps to 2472 to 2550 (VLFAQEIAKR…SLGRLATKRL (79 aa)). O-(pantetheine 4'-phosphoryl)serine is present on serine 2509.

It functions in the pathway secondary metabolite biosynthesis. In terms of biological role, highly reducing polyketide synthase (HR-PKS); part of the gene cluster that mediates the biosynthesis of squalestatin S1 (SQS1, also known as zaragozic acid A), a heavily oxidized fungal polyketide that offers potent cholesterol lowering activity by targeting squalene synthase (SS). SQS1 is composed of a 2,8-dioxobicyclic[3.2.1]octane-3,4,5-tricarboxyclic acid core that is connected to two lipophilic polyketide arms. These initial steps feature the priming of an unusual benzoic acid starter unit onto the highly reducing polyketide synthase pks2, followed by oxaloacetate extension and product release to generate a tricarboxylic acid containing product. The phenylalanine ammonia lyase (PAL) M7 and the acyl-CoA ligase M9 are involved in transforming phenylalanine into benzoyl-CoA. The citrate synthase-like protein R3 is involved in connecting the C-alpha-carbons of the hexaketide chain and oxaloacetate to afford the tricarboxylic acid unit. The potential hydrolytic enzymes, M8 and M10, are in close proximity to pks2 and may participate in product release. On the other side, the tetraketide arm is synthesized by a the squalestatin tetraketide synthase pks1 and enzymatically esterified to the core in the last biosynthetic step, by the acetyltransferase M4. The biosynthesis of the tetraketide must involve 3 rounds of chain extension. After the first and second rounds methyl-transfer occurs, and in all rounds of extension the ketoreductase and dehydratase are active. The enoyl reductase and C-MeT of pks1 are not active in the final round of extension. The acetyltransferase M4 appears to have a broad substrate selectivity for its acyl CoA substrate, allowing the in vitro synthesis of novel squalestatins. The biosynthesis of SQS1 requires several oxidative steps likely performed by oxidoreductases M1, R1 and R2. Finally, in support of the identification of the cluster as being responsible for SQS1 production, the cluster contains a gene encoding a putative squalene synthase (SS) R6, suggesting a likely mechanism for self-resistance. This is Squalestatin hexaketide synthase from Phoma sp. (strain ATCC 20986 / MF5453).